Here is an 81-residue protein sequence, read N- to C-terminus: Thrombin-like enzyme collinein-3 (81 aa).

Aspartate 4 is a catalytic residue. A disulfide bond links cysteine 51 and cysteine 68.

In terms of assembly, monomer. As to expression, expressed by the vanom gland.

The protein localises to the secreted. Thrombin-like snake venom serine protease. The sequence is that of Thrombin-like enzyme collinein-3 from Crotalus durissus collilineatus (Brazilian rattlesnake).